A 1107-amino-acid chain; its full sequence is Enolase-phosphatase E1 (1107 aa).

The Mg(2+) site is built by Asp19 and Glu21. Substrate-binding positions include 152-153 (SS) and Lys186. Asp211 serves as a coordination point for Mg(2+). The segment at 258-1107 (SVKSTETENG…SATPSVETES (850 aa)) is disordered. Residues 260–289 (KSTETENGAEKETVTESTEKVADESEKETE) show a composition bias toward basic and acidic residues. Over residues 291–306 (ETAAAETENGAEAENG) the composition is skewed to low complexity. The segment covering 366 to 376 (DAMDVDAEMTD) has biased composition (acidic residues). Basic and acidic residues-rich tracts occupy residues 393 to 427 (VTEK…DTKQ) and 435 to 462 (GEDK…KEEE). Residues 475–485 (DKMDVDEEDSA) are compositionally biased toward acidic residues. 6 stretches are compositionally biased toward basic and acidic residues: residues 486-512 (VIEK…KEEN), 534-548 (DETK…KEES), 572-586 (TVEK…SKSE), 593-604 (TSEKKVEDKSAN), 610-686 (KEPK…EVKA), and 693-776 (DESK…KSVD). Residues 794–803 (EETSATTEAQ) are compositionally biased toward low complexity. 2 stretches are compositionally biased toward basic and acidic residues: residues 804 to 838 (ATKE…DAKS) and 849 to 908 (KEMK…ETKG). Positions 909–919 (VEATTAGPVEE) are enriched in low complexity. The segment covering 920-935 (VAVEATEEDVAMEAES) has biased composition (acidic residues). 3 stretches are compositionally biased toward basic and acidic residues: residues 937 to 957 (DAVK…KLDS), 1001 to 1028 (DEVK…EADS), and 1035 to 1047 (NHDE…KEND). A compositionally biased stretch (low complexity) spans 1048–1083 (TSASNIEEASSATTTTTNGTSTESDSSSTTPSSETV).

This sequence belongs to the HAD-like hydrolase superfamily. MasA/MtnC family. In terms of assembly, monomer. It depends on Mg(2+) as a cofactor.

The protein resides in the cytoplasm. Its subcellular location is the nucleus. It catalyses the reaction 5-methylsulfanyl-2,3-dioxopentyl phosphate + H2O = 1,2-dihydroxy-5-(methylsulfanyl)pent-1-en-3-one + phosphate. Its pathway is amino-acid biosynthesis; L-methionine biosynthesis via salvage pathway; L-methionine from S-methyl-5-thio-alpha-D-ribose 1-phosphate: step 3/6. The protein operates within amino-acid biosynthesis; L-methionine biosynthesis via salvage pathway; L-methionine from S-methyl-5-thio-alpha-D-ribose 1-phosphate: step 4/6. Bifunctional enzyme that catalyzes the enolization of 2,3-diketo-5-methylthiopentyl-1-phosphate (DK-MTP-1-P) into the intermediate 2-hydroxy-3-keto-5-methylthiopentenyl-1-phosphate (HK-MTPenyl-1-P), which is then dephosphorylated to form the acireductone 1,2-dihydroxy-3-keto-5-methylthiopentene (DHK-MTPene). The polypeptide is Enolase-phosphatase E1 (Aedes aegypti (Yellowfever mosquito)).